We begin with the raw amino-acid sequence, 159 residues long: SsrA-binding protein (159 aa).

Belongs to the SmpB family.

It is found in the cytoplasm. Functionally, required for rescue of stalled ribosomes mediated by trans-translation. Binds to transfer-messenger RNA (tmRNA), required for stable association of tmRNA with ribosomes. tmRNA and SmpB together mimic tRNA shape, replacing the anticodon stem-loop with SmpB. tmRNA is encoded by the ssrA gene; the 2 termini fold to resemble tRNA(Ala) and it encodes a 'tag peptide', a short internal open reading frame. During trans-translation Ala-aminoacylated tmRNA acts like a tRNA, entering the A-site of stalled ribosomes, displacing the stalled mRNA. The ribosome then switches to translate the ORF on the tmRNA; the nascent peptide is terminated with the 'tag peptide' encoded by the tmRNA and targeted for degradation. The ribosome is freed to recommence translation, which seems to be the essential function of trans-translation. This is SsrA-binding protein from Dichelobacter nodosus (strain VCS1703A).